Consider the following 660-residue polypeptide: Acetyl-coenzyme A synthetase (660 aa).

CoA contacts are provided by residues 197–200 (RGGK) and Thr-317. ATP-binding positions include 397–399 (GEP), 421–426 (DTFWQT), Asp-512, and Arg-528. Ser-536 is a binding site for CoA. ATP is bound at residue Arg-539. Val-550 and Val-555 together coordinate Mg(2+). At Lys-625 the chain carries N6-acetyllysine.

This sequence belongs to the ATP-dependent AMP-binding enzyme family. It depends on Mg(2+) as a cofactor. Acetylated. Deacetylation by the SIR2-homolog deacetylase activates the enzyme.

The catalysed reaction is acetate + ATP + CoA = acetyl-CoA + AMP + diphosphate. It participates in ketone degradation; acetoin degradation. In terms of biological role, catalyzes the conversion of acetate into acetyl-CoA (AcCoA), an essential intermediate at the junction of anabolic and catabolic pathways. AcsA undergoes a two-step reaction. In the first half reaction, AcsA combines acetate with ATP to form acetyl-adenylate (AcAMP) intermediate. In the second half reaction, it can then transfer the acetyl group from AcAMP to the sulfhydryl group of CoA, forming the product AcCoA. Although acetate is the preferred substrate of AcsA, propionate is also used, but at a diminished rate compared with that of acetate. Fatty acids with more than three carbon atoms are usually not accepted as substrates by AcsA. The polypeptide is Acetyl-coenzyme A synthetase (Cupriavidus necator (strain ATCC 17699 / DSM 428 / KCTC 22496 / NCIMB 10442 / H16 / Stanier 337) (Ralstonia eutropha)).